We begin with the raw amino-acid sequence, 226 residues long: X-linked lymphocyte-regulated protein 3C (226 aa).

A disordered region spans residues 1 to 66 (MSSRKRKATD…QARKEKQDLV (66 aa)). Residues 8–18 (ATDTAGRHSRM) are compositionally biased toward basic and acidic residues. Over residues 21-30 (NLSSDDSQNP) the composition is skewed to polar residues. Composition is skewed to basic and acidic residues over residues 39–48 (EVLDAGREDI) and 56–66 (QQARKEKQDLV). The stretch at 155–210 (ESLTLQKNRMEEFKSLCEKYLEKLEVLRDSRGNSIAEELRRLIATLEIKLLMLHNQ) forms a coiled coil.

Belongs to the XLR/SYCP3 family. In terms of tissue distribution, expressed in lymphoid cells.

This chain is X-linked lymphocyte-regulated protein 3C (Xlr3c), found in Mus musculus (Mouse).